We begin with the raw amino-acid sequence, 382 residues long: Protein arginine N-methyltransferase PRMT10 (382 aa).

The segment at 1–21 (MASLPNGAASASAASSAAGGG) is disordered. Residues 7-17 (GAASASAASSA) show a composition bias toward low complexity. The SAM-dependent MTase PRMT-type domain occupies 28–359 (EVDFANYFCT…KENHRLMDME (332 aa)). Residues Glu142 and Glu151 contribute to the active site. The interval 189-229 (ENKMEDLEIAMHDWNLFVEDTESYYGVNMNVLTKAYRAEHE) is dimerization arm.

Belongs to the class I-like SAM-binding methyltransferase superfamily. Protein arginine N-methyltransferase family. In terms of assembly, ring-like homodimer.

The enzyme catalyses L-arginyl-[protein] + 2 S-adenosyl-L-methionine = N(omega),N(omega)-dimethyl-L-arginyl-[protein] + 2 S-adenosyl-L-homocysteine + 2 H(+). Functionally, methylates (mono and asymmetric dimethylation) the guanidino nitrogens of arginyl residues in some proteins. This chain is Protein arginine N-methyltransferase PRMT10 (PRMT10), found in Oryza sativa subsp. indica (Rice).